The chain runs to 486 residues: Beta-barrel assembly-enhancing protease (486 aa).

The first 19 residues, 1 to 19, serve as a signal peptide directing secretion; the sequence is MIATLLSSLLLTGPISAGA. His134 serves as a coordination point for Zn(2+). Residue Glu135 is part of the active site. Residues His138 and Glu199 each contribute to the Zn(2+) site. The active-site Proton donor is Asp203.

The protein belongs to the peptidase M48 family. BepA subfamily. The cofactor is Zn(2+).

It localises to the periplasm. In terms of biological role, functions both as a chaperone and a metalloprotease. Maintains the integrity of the outer membrane by promoting either the assembly or the elimination of outer membrane proteins, depending on their folding state. In Yersinia pestis, this protein is Beta-barrel assembly-enhancing protease.